Reading from the N-terminus, the 115-residue chain is Phosphoribosyl-ATP pyrophosphatase (115 aa).

Belongs to the PRA-PH family.

Its subcellular location is the cytoplasm. The enzyme catalyses 1-(5-phospho-beta-D-ribosyl)-ATP + H2O = 1-(5-phospho-beta-D-ribosyl)-5'-AMP + diphosphate + H(+). Its pathway is amino-acid biosynthesis; L-histidine biosynthesis; L-histidine from 5-phospho-alpha-D-ribose 1-diphosphate: step 2/9. The chain is Phosphoribosyl-ATP pyrophosphatase from Saccharophagus degradans (strain 2-40 / ATCC 43961 / DSM 17024).